A 157-amino-acid chain; its full sequence is V-type proton ATPase 16 kDa proteolipid subunit c (157 aa).

The Lumenal portion of the chain corresponds to 1 to 10 (MALPEENPVY). Residues 11–33 (GPFFGVMGAAAAIIFSALGAAYG) traverse the membrane as a helical segment. At 34–55 (TAKSGTGIAAMSVMRPELIMKS) the chain is on the cytoplasmic side. The helical transmembrane segment at 56–76 (IIPVVMAGIIAIYGLVVAVLI) threads the bilayer. Topologically, residues 77-94 (AGSLDTPTKYSLYKGFIH) are lumenal. The helical transmembrane segment at 95–116 (LGAGLAVGFSGLAAGFAIGIVG) threads the bilayer. Residues 117-128 (DAGVRGTAQQPR) are Cytoplasmic-facing. A helical transmembrane segment spans residues 129 to 154 (LFVGMILILIFAEVLGLYGLIVAIYL). The Lumenal segment spans residues 155–157 (YTK).

It belongs to the V-ATPase proteolipid subunit family. As to quaternary structure, V-ATPase is a heteromultimeric enzyme made up of two complexes: the ATP-hydrolytic V1 complex and the proton translocation V0 complex. The V1 complex consists of three catalytic AB heterodimers that form a heterohexamer, three peripheral stalks each consisting of EG heterodimers, one central rotor including subunits D and F, and the regulatory subunits C and H. The proton translocation complex V0 consists of the proton transport subunit a, a ring of proteolipid subunits c9c'', rotary subunit d, subunits e and f, and the accessory subunits VhaAC45 and ATP6AP2.

The protein localises to the membrane. Proton-conducting pore forming subunit of the V0 complex of vacuolar(H+)-ATPase (V-ATPase), a multisubunit enzyme composed of a peripheral complex (V1) that hydrolyzes ATP and a membrane integral complex (V0) that translocates protons. V-ATPase is responsible for acidifying and maintaining the pH of intracellular compartments and in some cell types, is targeted to the plasma membrane, where it is responsible for acidifying the extracellular environment. The polypeptide is V-type proton ATPase 16 kDa proteolipid subunit c (Aedes aegypti (Yellowfever mosquito)).